A 268-amino-acid chain; its full sequence is Transcription initiation factor TFIID subunit 14b (268 aa).

Positions 1-20 (MTNSSSSKKQAQDQPETSEP) are enriched in polar residues. A disordered region spans residues 1–36 (MTNSSSSKKQAQDQPETSEPTLKSLKTKMTKSDEKQ). A YEATS domain is found at 38-182 (KLKDIEISVP…ESFLARVQNH (145 aa)). Residues 229–263 (DELLQLAAARQQVQAHIAKLRRQISLLEGQNQTVK) are a coiled coil.

Belongs to the YAF9 family. As to quaternary structure, component of the TFIID complex. TFIID is composed of TATA binding protein (TBP) and a number of TBP-associated factors (TAFs) whose MWs range from 14-217 kDa. Interacts with TAF1, TAF4B and TAF12B. Component of the SWR1 chromatin-remodeling complex. Interacts with FLX, a component of the transcription activator complex FRI-C. Interacts with SWC4, and with EAF1A and EAF1B (via HSA domain). As to expression, expressed in roots, leaves, inflorescence and flowering tissues.

It localises to the cytoplasm. Its subcellular location is the nucleus. Its function is as follows. Negative regulator of flowering controlling the H4K5 acetylation levels in the FLC and FT chromatin. Positively regulates FLC expression. Component of the transcription factor IID (TFIID) complex that is essential for mediating regulation of RNA polymerase transcription. Component of the SWR1 complex which mediates the ATP-dependent exchange of histone H2A for the H2A variant HZT1 leading to transcriptional regulation of selected genes by chromatin remodeling. Component of a NuA4 histone acetyltransferase complex which is involved in transcriptional activation of selected genes principally by acetylation of nucleosomal histones H4 and H2A. This chain is Transcription initiation factor TFIID subunit 14b, found in Arabidopsis thaliana (Mouse-ear cress).